We begin with the raw amino-acid sequence, 765 residues long: MFSKFTSILQHAVEALAPSLPLQEDFVYHWKAITHYYIETSDDKAPVTDTNIPSHLEQMLDILVQEENERESGETGPCMEYLLHHKILETLYTLGKADCPPGMKQQVLVFYTKLLGRIRQPLLPHINVHRPVQKLIRLCGEVLATPTENEEIQFLCIVCAKLKQDPYLVNFFLENKMKSLASKGVPNVISEDTLKGQDSLSTDTGQSRQPEELSGATGMEQTELEDEPPHQMDHLSTSLDNLSVTSLPEASVVCPNQDYNLVNSLLNLTRSPDGRIAVKACEGLMLLVSLPEPAAAKCLTQSTCLCELLTDRLASLYKALPQSVDPLDIETVEAINWGLDSYSHKEDASAFPGKRALISFLSWFDYCDQLIKEAQKTAAVALAKAVHERFFIGVMEPQLMQTSEMGILTSTALLHRIVRQVTSDVLLQEMVFFILGEQREPETLAEISRHPLRHRLIEHCDHISDEISIMTLRMFEHLLQKPNEHILYNLVLRNLEERNYTEYKPLCPEDKDVVENGLIAGAVDLEEDPLFTDISPENTLPNQEWLSSSPPATPDHPKNDGKTEVHKIVNSFLCLVPDDAKSSYHVEGTGYDTYLRDAHRQFRDYCAICLRWEWPGSPKALEKCNLEAAFFEGHFLKVLFDRMGRILDQPYDVNLQVTSVLSRLSLFPHPHIHEYLLDPYVNLAPGCRSLFSVIVRVVGDLMLRIQRIQDFTPKLLLVRKRLLGLEPEGPIIDHITLLEGVIVLEEFCKELAAIAFVKYHASSTP.

Disordered regions lie at residues 193–236 (TLKG…DHLS) and 532–561 (TDISPENTLPNQEWLSSSPPATPDHPKNDG). Composition is skewed to polar residues over residues 196 to 208 (GQDSLSTDTGQSR) and 535 to 550 (SPENTLPNQEWLSSSP).

Belongs to the FHIP family. As to expression, expressed in all tissues tested, highly expressed brain. In terms of tissue distribution, only detected at high levels in testis.

In terms of biological role, required for proper functioning of the nervous system. The sequence is that of FHF complex subunit HOOK interacting protein 2A from Homo sapiens (Human).